Reading from the N-terminus, the 399-residue chain is Tyrosine--tRNA ligase (399 aa).

A 'HIGH' region motif is present at residues 42-51 (PTAPDLHLGH). Residues 226–230 (KMSKS) carry the 'KMSKS' region motif. ATP is bound at residue lysine 229. The S4 RNA-binding domain occupies 336–396 (MPIAAVLNKA…GKKAFARITL (61 aa)).

Belongs to the class-I aminoacyl-tRNA synthetase family. TyrS type 2 subfamily. As to quaternary structure, homodimer.

It is found in the cytoplasm. The enzyme catalyses tRNA(Tyr) + L-tyrosine + ATP = L-tyrosyl-tRNA(Tyr) + AMP + diphosphate + H(+). Catalyzes the attachment of tyrosine to tRNA(Tyr) in a two-step reaction: tyrosine is first activated by ATP to form Tyr-AMP and then transferred to the acceptor end of tRNA(Tyr). The chain is Tyrosine--tRNA ligase from Pseudomonas fluorescens (strain Pf0-1).